The sequence spans 371 residues: Maltose/maltodextrin import ATP-binding protein MalK (371 aa).

In terms of domain architecture, ABC transporter spans 4–234 (VQLQNVTKAW…PADRFVAGFI (231 aa)). 36–43 (GPSGCGKS) is a binding site for ATP.

Belongs to the ABC transporter superfamily. Maltooligosaccharide importer (TC 3.A.1.1.1) family. As to quaternary structure, the complex is composed of two ATP-binding proteins (MalK), two transmembrane proteins (MalG and MalK) and a solute-binding protein (MalE).

The protein resides in the cell inner membrane. It catalyses the reaction D-maltose(out) + ATP + H2O = D-maltose(in) + ADP + phosphate + H(+). Part of the ABC transporter complex MalEFGK involved in maltose/maltodextrin import. Responsible for energy coupling to the transport system. The protein is Maltose/maltodextrin import ATP-binding protein MalK of Shigella flexneri serotype 5b (strain 8401).